The sequence spans 1374 residues: L-2-aminoadipate reductase large subunit (1374 aa).

In terms of domain architecture, Carrier spans 828–905; the sequence is SEFNQQEREI…AFAAEVSRLK (78 aa). Serine 865 carries the O-(pantetheine 4'-phosphoryl)serine modification.

It belongs to the ATP-dependent AMP-binding enzyme family. As to quaternary structure, heterodimer of an alpha and a beta subunit. It depends on pantetheine 4'-phosphate as a cofactor.

The enzyme catalyses (S)-2-amino-6-oxohexanoate + NADP(+) + H2O = L-2-aminoadipate + NADPH + 2 H(+). It catalyses the reaction (S)-2-amino-6-oxohexanoate + NAD(+) + H2O = L-2-aminoadipate + NADH + 2 H(+). It carries out the reaction (S)-2-amino-6-oxohexanoate + AMP + diphosphate + NADP(+) = L-2-aminoadipate + ATP + NADPH + H(+). Its pathway is amino-acid biosynthesis; L-lysine biosynthesis via AAA pathway; L-lysine from L-alpha-aminoadipate (fungal route): step 1/3. Catalyzes the activation of alpha-aminoadipate by ATP-dependent adenylation and the reduction of activated alpha-aminoadipate by NADPH. The activated alpha-aminoadipate is bound to the phosphopantheinyl group of the enzyme itself before it is reduced to (S)-2-amino-6-oxohexanoate. The protein is L-2-aminoadipate reductase large subunit (LYS2) of Candida glabrata (strain ATCC 2001 / BCRC 20586 / JCM 3761 / NBRC 0622 / NRRL Y-65 / CBS 138) (Yeast).